The primary structure comprises 86 residues: Dolichyl-diphosphooligosaccharide--protein glycosyltransferase subunit OST5 (86 aa).

Residues T2 to K27 lie on the Lumenal side of the membrane. Residues F28–G48 form a helical membrane-spanning segment. Residues S49 to K56 lie on the Cytoplasmic side of the membrane. Residues L57 to F77 form a helical membrane-spanning segment. The Lumenal portion of the chain corresponds to A78 to V86.

The protein belongs to the OST5 family. Component of the oligosaccharyltransferase (OST) complex, which appears to exist in two assemblies comprising OST1, OST2, OST4, OST5, STT3, SWP1, WPB1, and either OST3 or OST6. OST assembly occurs through the formation of 3 subcomplexes. Subcomplex 1 contains OST1 and OST5, subcomplex 2 contains STT3, OST3, and OST4, and subcomplex 3 contains OST2, WBP1, and SWP1.

The protein localises to the endoplasmic reticulum membrane. It participates in protein modification; protein glycosylation. In terms of biological role, subunit of the oligosaccharyl transferase (OST) complex that catalyzes the initial transfer of a defined glycan (Glc(3)Man(9)GlcNAc(2) in eukaryotes) from the lipid carrier dolichol-pyrophosphate to an asparagine residue within an Asn-X-Ser/Thr consensus motif in nascent polypeptide chains, the first step in protein N-glycosylation. N-glycosylation occurs cotranslationally and the complex associates with the Sec61 complex at the channel-forming translocon complex that mediates protein translocation across the endoplasmic reticulum (ER). All subunits are required for a maximal enzyme activity. This chain is Dolichyl-diphosphooligosaccharide--protein glycosyltransferase subunit OST5 (OST5), found in Saccharomyces cerevisiae (strain ATCC 204508 / S288c) (Baker's yeast).